Reading from the N-terminus, the 360-residue chain is Peptide chain release factor 1 (360 aa).

Position 235 is an N5-methylglutamine (glutamine 235).

Belongs to the prokaryotic/mitochondrial release factor family. In terms of processing, methylated by PrmC. Methylation increases the termination efficiency of RF1.

It is found in the cytoplasm. Peptide chain release factor 1 directs the termination of translation in response to the peptide chain termination codons UAG and UAA. The chain is Peptide chain release factor 1 from Dechloromonas aromatica (strain RCB).